The sequence spans 303 residues: Ferrochelatase (303 aa).

Residues His-185 and Glu-262 each contribute to the Fe cation site.

Belongs to the ferrochelatase family.

Its subcellular location is the cytoplasm. It carries out the reaction heme b + 2 H(+) = protoporphyrin IX + Fe(2+). Its pathway is porphyrin-containing compound metabolism; protoheme biosynthesis; protoheme from protoporphyrin-IX: step 1/1. Catalyzes the ferrous insertion into protoporphyrin IX. The chain is Ferrochelatase from Campylobacter jejuni subsp. jejuni serotype O:2 (strain ATCC 700819 / NCTC 11168).